The chain runs to 185 residues: Crossover junction endodeoxyribonuclease RuvC (185 aa).

Catalysis depends on residues Asp7, Glu68, and Asp141. Asp7, Glu68, and Asp141 together coordinate Mg(2+).

Belongs to the RuvC family. As to quaternary structure, homodimer which binds Holliday junction (HJ) DNA. The HJ becomes 2-fold symmetrical on binding to RuvC with unstacked arms; it has a different conformation from HJ DNA in complex with RuvA. In the full resolvosome a probable DNA-RuvA(4)-RuvB(12)-RuvC(2) complex forms which resolves the HJ. Mg(2+) serves as cofactor.

The protein localises to the cytoplasm. The catalysed reaction is Endonucleolytic cleavage at a junction such as a reciprocal single-stranded crossover between two homologous DNA duplexes (Holliday junction).. Functionally, the RuvA-RuvB-RuvC complex processes Holliday junction (HJ) DNA during genetic recombination and DNA repair. Endonuclease that resolves HJ intermediates. Cleaves cruciform DNA by making single-stranded nicks across the HJ at symmetrical positions within the homologous arms, yielding a 5'-phosphate and a 3'-hydroxyl group; requires a central core of homology in the junction. The consensus cleavage sequence is 5'-(A/T)TT(C/G)-3'. Cleavage occurs on the 3'-side of the TT dinucleotide at the point of strand exchange. HJ branch migration catalyzed by RuvA-RuvB allows RuvC to scan DNA until it finds its consensus sequence, where it cleaves and resolves the cruciform DNA. This chain is Crossover junction endodeoxyribonuclease RuvC, found in Mycobacterium sp. (strain MCS).